The primary structure comprises 210 residues: Large ribosomal subunit protein uL3 (210 aa).

The disordered stretch occupies residues 133–152; that stretch reads ATHGNSLSHRVHGSTGQNQT. Position 151 is an N5-methylglutamine (glutamine 151).

The protein belongs to the universal ribosomal protein uL3 family. Part of the 50S ribosomal subunit. Forms a cluster with proteins L14 and L19. Methylated by PrmB.

Functionally, one of the primary rRNA binding proteins, it binds directly near the 3'-end of the 23S rRNA, where it nucleates assembly of the 50S subunit. This Francisella tularensis subsp. holarctica (strain FTNF002-00 / FTA) protein is Large ribosomal subunit protein uL3.